Consider the following 95-residue polypeptide: Aspartyl/glutamyl-tRNA(Asn/Gln) amidotransferase subunit C (95 aa).

It belongs to the GatC family. As to quaternary structure, heterotrimer of A, B and C subunits.

The catalysed reaction is L-glutamyl-tRNA(Gln) + L-glutamine + ATP + H2O = L-glutaminyl-tRNA(Gln) + L-glutamate + ADP + phosphate + H(+). It carries out the reaction L-aspartyl-tRNA(Asn) + L-glutamine + ATP + H2O = L-asparaginyl-tRNA(Asn) + L-glutamate + ADP + phosphate + 2 H(+). Its function is as follows. Allows the formation of correctly charged Asn-tRNA(Asn) or Gln-tRNA(Gln) through the transamidation of misacylated Asp-tRNA(Asn) or Glu-tRNA(Gln) in organisms which lack either or both of asparaginyl-tRNA or glutaminyl-tRNA synthetases. The reaction takes place in the presence of glutamine and ATP through an activated phospho-Asp-tRNA(Asn) or phospho-Glu-tRNA(Gln). The protein is Aspartyl/glutamyl-tRNA(Asn/Gln) amidotransferase subunit C of Desulfosudis oleivorans (strain DSM 6200 / JCM 39069 / Hxd3) (Desulfococcus oleovorans).